Here is a 129-residue protein sequence, read N- to C-terminus: uncharacterized protein (129 aa).

The segment at 1 to 129 is disordered; it reads MWLWQDIQCC…HTSNGRTGDL (129 aa). A compositionally biased stretch (basic and acidic residues) spans 87–100; sequence KGADTRRLPRETRP. Polar residues predominate over residues 119-129; it reads PHTSNGRTGDL.

This is an uncharacterized protein from Homo sapiens (Human).